The chain runs to 135 residues: MMLSPDQAADSDHPSSTHSDPESLGGADTKVLGSVSDLEPVEEADGDGKGGSRAALYPHPQQLSREEKRRRRRATAKYRSAHATRERIRVEAFNLAFAELRKLLPTLPPDKKLSKIEILRLAICYISYLNHVLDV.

The disordered stretch occupies residues 1-81 (MMLSPDQAAD…RRATAKYRSA (81 aa)). Residues 10–21 (DSDHPSSTHSDP) are compositionally biased toward basic and acidic residues. The span at 68–81 (KRRRRRATAKYRSA) shows a compositional bias: basic residues. Residues 77-129 (KYRSAHATRERIRVEAFNLAFAELRKLLPTLPPDKKLSKIEILRLAICYISYL) enclose the bHLH domain.

Homodimer. Interacts and may form heterodimers with STAT3. In terms of tissue distribution, expressed in developing neurons. Transiently expressed in the cerebellum during postnatal development, exclusively in the premigratory zone of the external granule layer where postmitotic neurons undergo initial stages of neuronal differentiation. Expression is not detected in mature neurons. Expressed in the anterior lobe of the adult pituitary.

The protein resides in the nucleus. Transcription factor which binds the E box motif 5'-CA[TC][AG]TG-3'. Involved in regulating energy expenditure, body mass, voluntary physical activity, mating behavior and reproductive longevity, acting through the hypothalamic-pituitary-gonadal axis. Acts as a transcriptional activator of target genes, including Ndn, Pcsk1, Mc4r. Is also a transcriptional activator of KISS1. May act centrally to regulate function of both white and brown adipose tissue. Together with NHLH1, required to maintain migration and survival of cells in the anterior extramural migration stream (aes), which forms the precerebellar nuclei. Also, in concert with Nhlh1, may determine fate of gonadotropin releasing hormone-1 (GnRH-1) neurons. This chain is Helix-loop-helix protein 2 (Nhlh2), found in Mus musculus (Mouse).